The chain runs to 261 residues: 1-(5-phosphoribosyl)-5-[(5-phosphoribosylamino)methylideneamino] imidazole-4-carboxamide isomerase (261 aa).

The active-site Proton acceptor is D7. D129 functions as the Proton donor in the catalytic mechanism.

Belongs to the HisA/HisF family.

It is found in the cytoplasm. The enzyme catalyses 1-(5-phospho-beta-D-ribosyl)-5-[(5-phospho-beta-D-ribosylamino)methylideneamino]imidazole-4-carboxamide = 5-[(5-phospho-1-deoxy-D-ribulos-1-ylimino)methylamino]-1-(5-phospho-beta-D-ribosyl)imidazole-4-carboxamide. Its pathway is amino-acid biosynthesis; L-histidine biosynthesis; L-histidine from 5-phospho-alpha-D-ribose 1-diphosphate: step 4/9. This is 1-(5-phosphoribosyl)-5-[(5-phosphoribosylamino)methylideneamino] imidazole-4-carboxamide isomerase from Colwellia psychrerythraea (strain 34H / ATCC BAA-681) (Vibrio psychroerythus).